The chain runs to 463 residues: Retinoic acid receptor RXR-gamma (463 aa).

The tract at residues 1–138 is modulating; it reads MYGNYSHFMK…TSPGSLVKHI (138 aa). A disordered region spans residues 16 to 53; that stretch reads GGSPGHTGSTSMSPSVALPTGKPMDSHPSYTDTPVSAP. 2 NR C4-type zinc fingers span residues 139–159 and 175–199; these read CAICGDRSSGKHYGVYSCEGC and CRDNKDCLIDKRQRNRCQYCRYQKC. The nuclear receptor DNA-binding region spans 139–204; sequence CAICGDRSSG…RYQKCLVMGM (66 aa). Residues 205-230 are hinge; it reads KREAVQEERQRSRERAESEAECASSS. The segment covering 211–222 has biased composition (basic and acidic residues); that stretch reads EERQRSRERAES. The segment at 211–232 is disordered; the sequence is EERQRSRERAESEAECASSSHE. An NR LBD domain is found at 231-459; the sequence is HEDMPVERIL…SFLMEMLETP (229 aa).

The protein belongs to the nuclear hormone receptor family. NR2 subfamily. Homodimer. Heterodimer with a RAR molecule. Binds DNA preferentially as a RAR/RXR heterodimer. Interacts with RARA. Post-translationally, acetylated by EP300.

The protein localises to the nucleus. It is found in the cytoplasm. Receptor for retinoic acid. Retinoic acid receptors bind as heterodimers to their target response elements in response to their ligands, all-trans or 9-cis retinoic acid, and regulate gene expression in various biological processes. The RAR/RXR heterodimers bind to the retinoic acid response elements (RARE) composed of tandem 5'-AGGTCA-3' sites known as DR1-DR5. The high affinity ligand for RXRs is 9-cis retinoic acid. The protein is Retinoic acid receptor RXR-gamma (Rxrg) of Mus musculus (Mouse).